A 199-amino-acid polypeptide reads, in one-letter code: dCTP deaminase (199 aa).

DCTP-binding positions include 110–115 (RSSLAR), D128, 136–138 (VLE), Y171, and Q182. Catalysis depends on E138, which acts as the Proton donor/acceptor.

This sequence belongs to the dCTP deaminase family. As to quaternary structure, homotrimer.

The enzyme catalyses dCTP + H2O + H(+) = dUTP + NH4(+). The protein operates within pyrimidine metabolism; dUMP biosynthesis; dUMP from dCTP (dUTP route): step 1/2. Functionally, catalyzes the deamination of dCTP to dUTP. The sequence is that of dCTP deaminase from Pseudoalteromonas atlantica (strain T6c / ATCC BAA-1087).